A 68-amino-acid chain; its full sequence is MKANELRALDDAQLREKLAEYKVELFNLRFQKATGKLTNTARPRLVKKEIARILTILRERELAQAELG.

The protein belongs to the universal ribosomal protein uL29 family.

The protein is Large ribosomal subunit protein uL29 of Chloroflexus aurantiacus (strain ATCC 29364 / DSM 637 / Y-400-fl).